We begin with the raw amino-acid sequence, 668 residues long: MSTQAAGNQTSSGATDSEDSYDSWYIDEPQGGQELQPEGLVPSCQPNVPPSLYHTCLAVLSILVLFLLAMLVRRRQLWPRCGHGRPGLPSPVDFLTGDRPRTVPAAVFMVLFSSLCLLLPTEDPLPFLSLASPPGRDGEAETSRGPWKILALLYYPALYYPLAACATVRHGAAHLLGSLLSWAHLGVQVWQRAECPESPKIYKYYSLLASLPLLLGLGFLSLWYPVQLVRSFGHGAATGSKGLQSSYSEEYLRTLLCQKKLKSSSHTCKRGFASQAWMYFRHSVYIPQRGFRLPLKLVLSVTLTGTAIYQVALLLLVGVVPTIQKVRAGITTDVSYLLAGFGIVLSEDRQEVVELVKHHLWALEVCYISALVLSCLLTFLMLVHSLVTHRTNLRALHRGGALDIGPLTQSPRPSRQAIFCWMSFTAYQTAFTCLGLLVQQILFFLGTLTLAFLVFMPMLHGRNLLLLHYLKSSWPFWLTLALAVTLQNAAAHWAFLDTHHGRPGLTNRRALYAATFLLFPVNVLVGTMVAAWRVLLSALYNAVHLGRMDLSLLPLRAATLDPGYHTYCNFLRMEASQSHPAATAFCALLLRTQRPKPRATPQDGLRLGEEEEGIQLLQTKDLVAKGAGPRARQGRARWGLAYTLLHNPALQAFRKTALPGARPNGAQP.

The segment covering 1–15 (MSTQAAGNQTSSGAT) has biased composition (polar residues). Residues 1–28 (MSTQAAGNQTSSGATDSEDSYDSWYIDE) are disordered. Over 1-51 (MSTQAAGNQTSSGATDSEDSYDSWYIDEPQGGQELQPEGLVPSCQPNVPPS) the chain is Extracellular. The N-linked (GlcNAc...) asparagine glycan is linked to asparagine 8. Residues 52–72 (LYHTCLAVLSILVLFLLAMLV) traverse the membrane as a helical segment. At 73-101 (RRRQLWPRCGHGRPGLPSPVDFLTGDRPR) the chain is on the cytoplasmic side. A helical membrane pass occupies residues 102 to 122 (TVPAAVFMVLFSSLCLLLPTE). Over 123-145 (DPLPFLSLASPPGRDGEAETSRG) the chain is Extracellular. Residues 146-166 (PWKILALLYYPALYYPLAACA) form a helical membrane-spanning segment. The Cytoplasmic segment spans residues 167–169 (TVR). A helical transmembrane segment spans residues 170-190 (HGAAHLLGSLLSWAHLGVQVW). Topologically, residues 191 to 206 (QRAECPESPKIYKYYS) are extracellular. A helical transmembrane segment spans residues 207 to 227 (LLASLPLLLGLGFLSLWYPVQ). Over 228–296 (LVRSFGHGAA…PQRGFRLPLK (69 aa)) the chain is Cytoplasmic. The interaction with RBP1 stretch occupies residues 236 to 294 (AATGSKGLQSSYSEEYLRTLLCQKKLKSSSHTCKRGFASQAWMYFRHSVYIPQRGFRLP). A helical transmembrane segment spans residues 297–317 (LVLSVTLTGTAIYQVALLLLV). At 318-368 (GVVPTIQKVRAGITTDVSYLLAGFGIVLSEDRQEVVELVKHHLWALEVCYI) the chain is on the extracellular side. A helical membrane pass occupies residues 369–389 (SALVLSCLLTFLMLVHSLVTH). At 390–423 (RTNLRALHRGGALDIGPLTQSPRPSRQAIFCWMS) the chain is on the cytoplasmic side. The helical transmembrane segment at 424–444 (FTAYQTAFTCLGLLVQQILFF) threads the bilayer. Residues 445-474 (LGTLTLAFLVFMPMLHGRNLLLLHYLKSSW) lie on the Extracellular side of the membrane. The helical transmembrane segment at 475-495 (PFWLTLALAVTLQNAAAHWAF) threads the bilayer. Residues 496 to 510 (LDTHHGRPGLTNRRA) are Cytoplasmic-facing. Positions 511-548 (LYAATFLLFPVNVLVGTMVAAWRVLLSALYNAVHLGRM) form an intramembrane region, helical. Residues 549-668 (DLSLLPLRAA…PGARPNGAQP (120 aa)) are Cytoplasmic-facing. Tyrosine 642 is subject to Phosphotyrosine.

As to quaternary structure, homodimer. Interacts with JAK2 and STAT5. Interacts (via extracellular domains) with RBP4. Interacts (via cytoplasmic domains) with RBP1. Phosphorylated on tyrosine residues in response to RBP4 binding. Phosphorylation requires the presence of LRAT, suggesting it may be triggered by the uptake of retinol that is then metabolized within the cell to retinoids that function as signaling molecules. Expressed in placenta, spleen, retinal blood vessels, and in astrocyte perivascular endfeet. Not detected in the endothelial cells of the choriocapillaris (at protein level).

It is found in the cell membrane. Its function is as follows. Functions as a retinol transporter. Accepts all-trans retinol from the extracellular retinol-binding protein RBP4, facilitates retinol transport across the cell membrane, and then transfers retinol to the cytoplasmic retinol-binding protein RBP1. Retinol uptake is enhanced by LRAT, an enzyme that converts retinol to all-trans retinyl esters, the storage forms of vitamin A. Contributes to the activation of a signaling cascade that depends on retinol transport and LRAT-dependent generation of retinol metabolites that then trigger activation of JAK2 and its target STAT5, and ultimately increase the expression of SOCS3 and inhibit cellular responses to insulin. Important for the homeostasis of vitamin A and its derivatives, such as retinoic acid. STRA6-mediated transport is particularly important in the eye, and under conditions of dietary vitamin A deficiency. Does not transport retinoic acid. This chain is Receptor for retinol uptake STRA6 (STRA6), found in Bos taurus (Bovine).